Consider the following 178-residue polypeptide: Putative metal-dependent hydrolase GTNG_0529 (178 aa).

Zn(2+) contacts are provided by histidine 68, histidine 161, and histidine 165.

Belongs to the metal hydrolase YfiT family. As to quaternary structure, homodimer. Requires Zn(2+) as cofactor.

The protein resides in the cytoplasm. Possible metal-dependent hydrolase. The sequence is that of Putative metal-dependent hydrolase GTNG_0529 from Geobacillus thermodenitrificans (strain NG80-2).